Reading from the N-terminus, the 631-residue chain is E3 ubiquitin-protein ligase Zswim2 (631 aa).

The SWIM-type zinc finger occupies 54 to 87 (FRVLLGNPHECSCPTFLKRGELCKHICWVLLKKF). Residues 139–348 (KDINAGDICP…APGYQCRLCL (210 aa)) are UBE2D1-binding. The RING-type 1 zinc-finger motif lies at 147 to 199 (CPICQEVLLEKKLPVTFCRFGCGNNVHIKCMRILANYQDTGSDSSVLRCPLCR). The ZZ-type zinc finger occupies 230–281 (HLGIPCNNCNQLPIEGRCYKCTECVEYHLCQECFDSCCHSSHAFASREKRNQ). C235, C238, C250, C253, C259, C262, H268, and H271 together coordinate Zn(2+). Residues 344–386 (CRLCLKSFSFGQYTRLLPCTHKFHRKCIDNWLLHKCNSCPIDR) form an RING-type 2 zinc finger. The disordered stretch occupies residues 589 to 614 (SKRQNNSMGKVRQKLGHPPRRPAYPP). The segment covering 599–608 (VRQKLGHPPR) has biased composition (basic residues).

As to quaternary structure, dimer. Interacts with UBE2D1. Post-translationally, polyubiquitinated. Polyubiquitination is followed by degradation via the proteasome. As to expression, expressed only in testis.

It carries out the reaction S-ubiquitinyl-[E2 ubiquitin-conjugating enzyme]-L-cysteine + [acceptor protein]-L-lysine = [E2 ubiquitin-conjugating enzyme]-L-cysteine + N(6)-ubiquitinyl-[acceptor protein]-L-lysine.. Its function is as follows. E3 ubiquitin-protein ligase involved in the regulation of Fas-, DR3- and DR4-mediated apoptosis. Functions in conjunction with the UBE2D1, UBE2D3 and UBE2E1 E2 ubiquitin-conjugating enzymes. The chain is E3 ubiquitin-protein ligase Zswim2 (Zswim2) from Mus musculus (Mouse).